Consider the following 261-residue polypeptide: tRNA pseudouridine synthase A (261 aa).

The active-site Nucleophile is the D51. Residue Y109 coordinates substrate.

It belongs to the tRNA pseudouridine synthase TruA family. In terms of assembly, homodimer.

It catalyses the reaction uridine(38/39/40) in tRNA = pseudouridine(38/39/40) in tRNA. In terms of biological role, formation of pseudouridine at positions 38, 39 and 40 in the anticodon stem and loop of transfer RNAs. This is tRNA pseudouridine synthase A from Shewanella frigidimarina (strain NCIMB 400).